The chain runs to 345 residues: Protein Tob1 (345 aa).

A Bipartite nuclear localization signal motif is present at residues 22–39 (RRRVNIFGEELERLLKKK). Residues 82 to 92 (VRGNLPQDLSV) are important for nuclear localization. Residues 144–160 (DPASSVSSSPSPPFGHS) show a composition bias toward low complexity. The tract at residues 144–171 (DPASSVSSSPSPPFGHSAAVSPTFMPRS) is disordered. Residues 161–218 (AAVSPTFMPRSTQPLTFTTATFAATKFGSTKMKNSGRSNKVARTSPINLGLNVNDLLK) are required for interaction with CPEB3. Threonine 204 bears the Phosphothreonine mark. The Nuclear export signal motif lies at 226-234 (MHSLYGLGL). The interval 231-267 (GLGLGSQQQPQQQQQPAQPPPPPPPPQQQQQQKTSAL) is disordered. Low complexity predominate over residues 237 to 246 (QQQPQQQQQP). Residues 247–257 (AQPPPPPPPPQ) are compositionally biased toward pro residues.

This sequence belongs to the BTG family. In terms of assembly, interacts with ERBB2. Interacts with CNOT7. Interacts with CPEB3 (via C-terminal RNA-binding region); recruits CNOT7 to CPEB3 to form a ternary complex required for mRNA deadenylation and decay. Interacts with CNOT8. Interacts with CPEB4. In terms of processing, phosphorylated on Ser and Thr residues. In terms of tissue distribution, ubiquitous.

The protein resides in the cytoplasm. Its subcellular location is the nucleus. Anti-proliferative protein; the function is mediated by association with deadenylase subunits of the CCR4-NOT complex. Mediates CPEB3-accelerated mRNA deadenylation by binding to CPEB3 and recruiting CNOT7 which leads to target mRNA deadenylation and decay. This chain is Protein Tob1 (TOB1), found in Homo sapiens (Human).